The primary structure comprises 463 residues: Bifunctional protein HldE (463 aa).

The tract at residues 1–311 is ribokinase; it reads MKKILVVGDL…EEIALILNQT (311 aa). 191 to 194 provides a ligand contact to ATP; the sequence is NRFE. The active site involves Asp-260. The interval 334–463 is cytidylyltransferase; the sequence is FTNGCFDLLH…IEKIKRTCND (130 aa).

In the N-terminal section; belongs to the carbohydrate kinase PfkB family. The protein in the C-terminal section; belongs to the cytidylyltransferase family. Homodimer.

It carries out the reaction D-glycero-beta-D-manno-heptose 7-phosphate + ATP = D-glycero-beta-D-manno-heptose 1,7-bisphosphate + ADP + H(+). The catalysed reaction is D-glycero-beta-D-manno-heptose 1-phosphate + ATP + H(+) = ADP-D-glycero-beta-D-manno-heptose + diphosphate. It functions in the pathway nucleotide-sugar biosynthesis; ADP-L-glycero-beta-D-manno-heptose biosynthesis; ADP-L-glycero-beta-D-manno-heptose from D-glycero-beta-D-manno-heptose 7-phosphate: step 1/4. Its pathway is nucleotide-sugar biosynthesis; ADP-L-glycero-beta-D-manno-heptose biosynthesis; ADP-L-glycero-beta-D-manno-heptose from D-glycero-beta-D-manno-heptose 7-phosphate: step 3/4. Its function is as follows. Catalyzes the phosphorylation of D-glycero-D-manno-heptose 7-phosphate at the C-1 position to selectively form D-glycero-beta-D-manno-heptose-1,7-bisphosphate. Functionally, catalyzes the ADP transfer from ATP to D-glycero-beta-D-manno-heptose 1-phosphate, yielding ADP-D-glycero-beta-D-manno-heptose. This is Bifunctional protein HldE from Helicobacter pylori (strain G27).